A 524-amino-acid chain; its full sequence is Phosphoenolpyruvate carboxykinase (ATP) (524 aa).

Substrate is bound by residues Arg-52, Tyr-188, and Lys-194. Residues Lys-194, His-213, and 229–237 (GLSGTGKTT) contribute to the ATP site. Mn(2+)-binding residues include Lys-194 and His-213. Asp-250 provides a ligand contact to Mn(2+). Glu-278, Arg-314, and Thr-439 together coordinate ATP. Arg-314 contacts substrate.

This sequence belongs to the phosphoenolpyruvate carboxykinase (ATP) family. The cofactor is Mn(2+).

The protein resides in the cytoplasm. It carries out the reaction oxaloacetate + ATP = phosphoenolpyruvate + ADP + CO2. It participates in carbohydrate biosynthesis; gluconeogenesis. In terms of biological role, involved in the gluconeogenesis. Catalyzes the conversion of oxaloacetate (OAA) to phosphoenolpyruvate (PEP) through direct phosphoryl transfer between the nucleoside triphosphate and OAA. The polypeptide is Phosphoenolpyruvate carboxykinase (ATP) (Campylobacter jejuni subsp. jejuni serotype O:23/36 (strain 81-176)).